Consider the following 406-residue polypeptide: Arginine biosynthesis bifunctional protein ArgJ (406 aa).

Substrate contacts are provided by Thr-156, Lys-182, Thr-193, Glu-279, Asn-401, and Thr-406. The active-site Nucleophile is the Thr-193.

The protein belongs to the ArgJ family. In terms of assembly, heterotetramer of two alpha and two beta chains.

It localises to the cytoplasm. The enzyme catalyses N(2)-acetyl-L-ornithine + L-glutamate = N-acetyl-L-glutamate + L-ornithine. The catalysed reaction is L-glutamate + acetyl-CoA = N-acetyl-L-glutamate + CoA + H(+). Its pathway is amino-acid biosynthesis; L-arginine biosynthesis; L-ornithine and N-acetyl-L-glutamate from L-glutamate and N(2)-acetyl-L-ornithine (cyclic): step 1/1. It participates in amino-acid biosynthesis; L-arginine biosynthesis; N(2)-acetyl-L-ornithine from L-glutamate: step 1/4. With respect to regulation, feedback inhibition by L-arginine. In terms of biological role, catalyzes two activities which are involved in the cyclic version of arginine biosynthesis: the synthesis of N-acetylglutamate from glutamate and acetyl-CoA as the acetyl donor, and of ornithine by transacetylation between N(2)-acetylornithine and glutamate. The polypeptide is Arginine biosynthesis bifunctional protein ArgJ (Bacillus amyloliquefaciens (Bacillus velezensis)).